The chain runs to 228 residues: Cytochrome c oxidase subunit 2 (228 aa).

Topologically, residues 1 to 14 (MANHSQLGFQDASS) are mitochondrial intermembrane. A helical membrane pass occupies residues 15–45 (PIMEELVEFHDHALIVALAICSLVLYLLAHM). Residues 46–58 (LMEKLSSNAVDAQ) are Mitochondrial matrix-facing. The chain crosses the membrane as a helical span at residues 59-86 (EVELIWTILPAIVLVLLALPSLQILYMM). At 87-228 (DEIDEPDLTL…EAWSSLLSSS (142 aa)) the chain is on the mitochondrial intermembrane side. Cu cation-binding residues include His160, Cys195, Glu197, Cys199, His203, and Met206. Glu197 is a Mg(2+) binding site.

This sequence belongs to the cytochrome c oxidase subunit 2 family. In terms of assembly, component of the cytochrome c oxidase (complex IV, CIV), a multisubunit enzyme composed of 14 subunits. The complex is composed of a catalytic core of 3 subunits MT-CO1, MT-CO2 and MT-CO3, encoded in the mitochondrial DNA, and 11 supernumerary subunits COX4I, COX5A, COX5B, COX6A, COX6B, COX6C, COX7A, COX7B, COX7C, COX8 and NDUFA4, which are encoded in the nuclear genome. The complex exists as a monomer or a dimer and forms supercomplexes (SCs) in the inner mitochondrial membrane with NADH-ubiquinone oxidoreductase (complex I, CI) and ubiquinol-cytochrome c oxidoreductase (cytochrome b-c1 complex, complex III, CIII), resulting in different assemblies (supercomplex SCI(1)III(2)IV(1) and megacomplex MCI(2)III(2)IV(2)). Found in a complex with TMEM177, COA6, COX18, COX20, SCO1 and SCO2. Interacts with TMEM177 in a COX20-dependent manner. Interacts with COX20. Interacts with COX16. Cu cation is required as a cofactor.

It is found in the mitochondrion inner membrane. It carries out the reaction 4 Fe(II)-[cytochrome c] + O2 + 8 H(+)(in) = 4 Fe(III)-[cytochrome c] + 2 H2O + 4 H(+)(out). Component of the cytochrome c oxidase, the last enzyme in the mitochondrial electron transport chain which drives oxidative phosphorylation. The respiratory chain contains 3 multisubunit complexes succinate dehydrogenase (complex II, CII), ubiquinol-cytochrome c oxidoreductase (cytochrome b-c1 complex, complex III, CIII) and cytochrome c oxidase (complex IV, CIV), that cooperate to transfer electrons derived from NADH and succinate to molecular oxygen, creating an electrochemical gradient over the inner membrane that drives transmembrane transport and the ATP synthase. Cytochrome c oxidase is the component of the respiratory chain that catalyzes the reduction of oxygen to water. Electrons originating from reduced cytochrome c in the intermembrane space (IMS) are transferred via the dinuclear copper A center (CU(A)) of subunit 2 and heme A of subunit 1 to the active site in subunit 1, a binuclear center (BNC) formed by heme A3 and copper B (CU(B)). The BNC reduces molecular oxygen to 2 water molecules using 4 electrons from cytochrome c in the IMS and 4 protons from the mitochondrial matrix. The protein is Cytochrome c oxidase subunit 2 (MT-CO2) of Anas platyrhynchos (Mallard).